Here is a 364-residue protein sequence, read N- to C-terminus: Chorismate synthase (364 aa).

Positions Met-41–Arg-60 are disordered. NADP(+) is bound by residues Arg-48 and Arg-54. Residues Arg-125–Ser-127, Asn-238–Ala-239, Gly-278, Lys-293–Ser-297, and Arg-319 contribute to the FMN site.

This sequence belongs to the chorismate synthase family. As to quaternary structure, homotetramer. Requires FMNH2 as cofactor.

It carries out the reaction 5-O-(1-carboxyvinyl)-3-phosphoshikimate = chorismate + phosphate. It participates in metabolic intermediate biosynthesis; chorismate biosynthesis; chorismate from D-erythrose 4-phosphate and phosphoenolpyruvate: step 7/7. Functionally, catalyzes the anti-1,4-elimination of the C-3 phosphate and the C-6 proR hydrogen from 5-enolpyruvylshikimate-3-phosphate (EPSP) to yield chorismate, which is the branch point compound that serves as the starting substrate for the three terminal pathways of aromatic amino acid biosynthesis. This reaction introduces a second double bond into the aromatic ring system. This chain is Chorismate synthase, found in Shewanella sp. (strain MR-4).